The sequence spans 206 residues: Regulator of rDNA transcription 14 (206 aa).

The tract at residues 178-206 (FVKDHRYPGLTPGLAPVGLSDEEDSSEED) is disordered. A phosphoserine mark is found at serine 197, serine 202, and serine 203. Acidic residues predominate over residues 197–206 (SDEEDSSEED).

Belongs to the RRT14 family.

It is found in the nucleus. The protein resides in the nucleolus. In terms of biological role, involved in ribosome biogenesis, probably through modulation of rDNA transcription. The protein is Regulator of rDNA transcription 14 (RRT14) of Saccharomyces cerevisiae (strain RM11-1a) (Baker's yeast).